The primary structure comprises 129 residues: Glycine cleavage system H protein (129 aa).

Positions 24-106 (LLKIGVSEFA…IGEGWLVILK (83 aa)) constitute a Lipoyl-binding domain. Position 65 is an N6-lipoyllysine (K65).

This sequence belongs to the GcvH family. In terms of assembly, the glycine cleavage system is composed of four proteins: P, T, L and H. The cofactor is (R)-lipoate.

Its function is as follows. The glycine cleavage system catalyzes the degradation of glycine. The H protein shuttles the methylamine group of glycine from the P protein to the T protein. This Prochlorococcus marinus (strain AS9601) protein is Glycine cleavage system H protein.